The following is a 394-amino-acid chain: Quinolinate synthase (394 aa).

Iminosuccinate contacts are provided by histidine 57 and serine 74. Cysteine 121 serves as a coordination point for [4Fe-4S] cluster. Residues 153–155 (YMN) and serine 174 each bind iminosuccinate. Residue cysteine 250 participates in [4Fe-4S] cluster binding. Iminosuccinate-binding positions include 276-278 (HPE) and threonine 293. Cysteine 340 lines the [4Fe-4S] cluster pocket.

This sequence belongs to the quinolinate synthase family. Type 3 subfamily. Requires [4Fe-4S] cluster as cofactor.

It localises to the cytoplasm. It catalyses the reaction iminosuccinate + dihydroxyacetone phosphate = quinolinate + phosphate + 2 H2O + H(+). It functions in the pathway cofactor biosynthesis; NAD(+) biosynthesis; quinolinate from iminoaspartate: step 1/1. Functionally, catalyzes the condensation of iminoaspartate with dihydroxyacetone phosphate to form quinolinate. This Nocardioides sp. (strain ATCC BAA-499 / JS614) protein is Quinolinate synthase.